The primary structure comprises 126 residues: Aspartate 1-decarboxylase (126 aa).

Ser-25 functions as the Schiff-base intermediate with substrate; via pyruvic acid in the catalytic mechanism. Pyruvic acid (Ser) is present on Ser-25. Residue Thr-57 participates in substrate binding. Residue Tyr-58 is the Proton donor of the active site. Substrate is bound at residue 73 to 75 (GAA).

It belongs to the PanD family. Heterooctamer of four alpha and four beta subunits. It depends on pyruvate as a cofactor. Is synthesized initially as an inactive proenzyme, which is activated by self-cleavage at a specific serine bond to produce a beta-subunit with a hydroxyl group at its C-terminus and an alpha-subunit with a pyruvoyl group at its N-terminus.

Its subcellular location is the cytoplasm. The catalysed reaction is L-aspartate + H(+) = beta-alanine + CO2. It participates in cofactor biosynthesis; (R)-pantothenate biosynthesis; beta-alanine from L-aspartate: step 1/1. In terms of biological role, catalyzes the pyruvoyl-dependent decarboxylation of aspartate to produce beta-alanine. The protein is Aspartate 1-decarboxylase of Pseudomonas aeruginosa (strain LESB58).